The following is a 1057-amino-acid chain: Carbamoyl phosphate synthase large chain (1057 aa).

The carboxyphosphate synthetic domain stretch occupies residues 1–401 (MPKRNDIKTI…SLLKAIRSLE (401 aa)). Positions 129, 169, 175, 176, 208, 210, 215, 241, 242, 243, 284, and 298 each coordinate ATP. Positions 133 to 327 (RTLMNDLNVP…IAKLAAKIAV (195 aa)) constitute an ATP-grasp 1 domain. Mg(2+) contacts are provided by Gln284, Glu298, and Asn300. The Mn(2+) site is built by Gln284, Glu298, and Asn300. Residues 402–546 (YGVHHLGLPN…YGTYETENES (145 aa)) are oligomerization domain. The segment at 547–929 (IVTDKEKILV…ALFKGLTGSG (383 aa)) is carbamoyl phosphate synthetic domain. The ATP-grasp 2 domain occupies 671–861 (EALLRKINVP…MAQLAMRAII (191 aa)). Residues Arg707, Arg746, Leu748, Glu752, Gly777, Val778, His779, Ser780, Gln820, and Glu832 each coordinate ATP. The Mg(2+) site is built by Gln820, Glu832, and Asn834. Mn(2+) contacts are provided by Gln820, Glu832, and Asn834. The MGS-like domain occupies 930-1057 (VEVKDHGTVL…ESMTFTMRQM (128 aa)). The tract at residues 930-1057 (VEVKDHGTVL…ESMTFTMRQM (128 aa)) is allosteric domain.

This sequence belongs to the CarB family. As to quaternary structure, composed of two chains; the small (or glutamine) chain promotes the hydrolysis of glutamine to ammonia, which is used by the large (or ammonia) chain to synthesize carbamoyl phosphate. Tetramer of heterodimers (alpha,beta)4. It depends on Mg(2+) as a cofactor. Mn(2+) is required as a cofactor.

It carries out the reaction hydrogencarbonate + L-glutamine + 2 ATP + H2O = carbamoyl phosphate + L-glutamate + 2 ADP + phosphate + 2 H(+). It catalyses the reaction hydrogencarbonate + NH4(+) + 2 ATP = carbamoyl phosphate + 2 ADP + phosphate + 2 H(+). It functions in the pathway amino-acid biosynthesis; L-arginine biosynthesis; carbamoyl phosphate from bicarbonate: step 1/1. Its pathway is pyrimidine metabolism; UMP biosynthesis via de novo pathway; (S)-dihydroorotate from bicarbonate: step 1/3. In terms of biological role, large subunit of the glutamine-dependent carbamoyl phosphate synthetase (CPSase). CPSase catalyzes the formation of carbamoyl phosphate from the ammonia moiety of glutamine, carbonate, and phosphate donated by ATP, constituting the first step of 2 biosynthetic pathways, one leading to arginine and/or urea and the other to pyrimidine nucleotides. The large subunit (synthetase) binds the substrates ammonia (free or transferred from glutamine from the small subunit), hydrogencarbonate and ATP and carries out an ATP-coupled ligase reaction, activating hydrogencarbonate by forming carboxy phosphate which reacts with ammonia to form carbamoyl phosphate. The polypeptide is Carbamoyl phosphate synthase large chain (Staphylococcus aureus (strain USA300 / TCH1516)).